The chain runs to 652 residues: Beta-mannosyltransferase 1 (652 aa).

The Cytoplasmic portion of the chain corresponds to 1–15 (MVDLFQWLKFYSMRR). A helical transmembrane segment spans residues 16 to 34 (LGQVAITLVLLNLFVFLGY). At 35 to 652 (KFTPSTVIGS…LYQLQEEERS (618 aa)) the chain is on the extracellular side. Asn-57 carries N-linked (GlcNAc...) asparagine glycosylation. Residues 535–652 (PARYAKQMEN…LYQLQEEERS (118 aa)) adopt a coiled-coil conformation. A disordered region spans residues 536–621 (ARYAKQMENE…EAKENEAKKK (86 aa)).

This sequence belongs to the BMT family.

The protein resides in the membrane. In terms of biological role, beta-mannosyltransferase involved in cell wall biosynthesis. Involved in the beta-mannosylation of outer chains of N-glycans. The polypeptide is Beta-mannosyltransferase 1 (BMT1) (Komagataella phaffii (strain ATCC 76273 / CBS 7435 / CECT 11047 / NRRL Y-11430 / Wegner 21-1) (Yeast)).